We begin with the raw amino-acid sequence, 641 residues long: Sodium-dependent nutrient amino acid transporter 1 (641 aa).

A disordered region spans residues 1-34; it reads MELKGVQPSNGSANGNGTTNAASTEKADTEKQTA. Topologically, residues 1–38 are cytoplasmic; it reads MELKGVQPSNGSANGNGTTNAASTEKADTEKQTAERTN. The segment covering 9–24 has biased composition (low complexity); the sequence is SNGSANGNGTTNAAST. Basic and acidic residues predominate over residues 25–34; the sequence is EKADTEKQTA. The next 3 membrane-spanning stretches (helical) occupy residues 39–59, 72–92, and 109–129; these read WGNGLEFLMSCISVSVGLGNV, GAFLIPYIIVLFLIGKPMYYL, and SVVPGFVGVGYGQAFGTICII. N-linked (GlcNAc...) asparagine glycosylation is found at asparagine 183 and asparagine 188. The next 9 helical transmembrane spans lie at 229 to 249, 258 to 278, 307 to 327, 341 to 361, 401 to 421, 441 to 461, 474 to 494, 516 to 536, and 552 to 572; these read PDWKLTLALFVAWVVIFLVIM, AAYFLALFPYVVLFVLLIRAV, AVVQCFFSLAVGSGPIIMFAS, IVTTLDTLTSLLGGITIFAIL, LFSVLFFFMLFVLGIGSIVAL, VALITSACGFLMGLVYVTPGG, TYVVFILAIFELAGIVWVYGL, CWSFFTPVMMIIIFIYSMATI, and IAGWLLFAIGAAQFPLWGLWY.

This sequence belongs to the sodium:neurotransmitter symporter (SNF) (TC 2.A.22) family.

It is found in the membrane. In terms of biological role, unusual broad substrate spectrum amino acid:sodium cotransporter that promotes absorption of the D isomers of essential amino acids. Neutral amino acids are the preferred substrates, especially methionine and phenylalanine. The protein is Sodium-dependent nutrient amino acid transporter 1 of Drosophila yakuba (Fruit fly).